The following is a 615-amino-acid chain: Mitogen-activated protein kinase 18 (615 aa).

The Protein kinase domain maps to Y25–F316. Residues I31–V39 and K54 contribute to the ATP site. D151 serves as the catalytic Proton acceptor. T187 is subject to Phosphothreonine. The TXY motif lies at T187–Y189. Phosphotyrosine is present on Y189. A Phosphothreonine modification is found at T192. Disordered stretches follow at residues R414 to V483 and N510 to A544. Residues S415 to S426 are compositionally biased toward low complexity. The span at N445–P459 shows a compositional bias: polar residues. A compositionally biased stretch (pro residues) spans G464–G473. 2 stretches are compositionally biased toward polar residues: residues N510–A522 and P532–A544.

It belongs to the protein kinase superfamily. CMGC Ser/Thr protein kinase family. MAP kinase subfamily. As to quaternary structure, interacts with PHS1. Binds to MAPKKK20. In terms of processing, dually phosphorylated on Thr-187 and Tyr-189, which activates the enzyme. Phosphorylated by MAPKKK20. Expressed in roots, seedlings, leaves, flower buds, flowers and siliques.

The protein localises to the nucleus. Its subcellular location is the cytoplasm. It catalyses the reaction L-seryl-[protein] + ATP = O-phospho-L-seryl-[protein] + ADP + H(+). The catalysed reaction is L-threonyl-[protein] + ATP = O-phospho-L-threonyl-[protein] + ADP + H(+). Activated by threonine and tyrosine phosphorylation. Inactivated by phosphatase PHS1. Mitogen-activated protein kinase (MAPK) that is specifically regulated by PHS1 and MAPKKK20 and mediates signaling that regulates cortical microtubule functions, maybe through regulation of microtubule dynamic instability. This chain is Mitogen-activated protein kinase 18, found in Arabidopsis thaliana (Mouse-ear cress).